A 416-amino-acid polypeptide reads, in one-letter code: Transmembrane protease serine 11B (416 aa).

At 1 to 17 (MYRHGISSQRSWPLWTT) the chain is on the cytoplasmic side. The helical; Signal-anchor for type II membrane protein transmembrane segment at 18–38 (IFIFLGVAAILGVTIGLLVHF) threads the bilayer. The Extracellular segment spans residues 39–416 (LAVEKTYYYQ…RNWITSKTGL (378 aa)). The 118-residue stretch at 43-160 (KTYYYQGDFH…ASIKLMEISK (118 aa)) folds into the SEA domain. N-linked (GlcNAc...) asparagine glycosylation is found at Asn-72 and Asn-107. A Peptidase S1 domain is found at 185 to 415 (IVNGKSSLEG…YRNWITSKTG (231 aa)). Cys-210 and Cys-226 are disulfide-bonded. Active-site charge relay system residues include His-225 and Asp-270. An N-linked (GlcNAc...) asparagine glycan is attached at Asn-315. Cystine bridges form between Cys-335–Cys-351 and Cys-362–Cys-391. Ser-366 serves as the catalytic Charge relay system.

The protein belongs to the peptidase S1 family.

The protein resides in the cell membrane. Inhibited by aprotinin, leupeptin, benzamidine, SERPINA1, SPINT1 and SPINT2. In terms of biological role, serine protease. In Homo sapiens (Human), this protein is Transmembrane protease serine 11B (TMPRSS11B).